Consider the following 197-residue polypeptide: Putative NADH dehydrogenase/NAD(P)H nitroreductase Plav_3612 (197 aa).

Belongs to the nitroreductase family. HadB/RutE subfamily. FMN is required as a cofactor.

This chain is Putative NADH dehydrogenase/NAD(P)H nitroreductase Plav_3612, found in Parvibaculum lavamentivorans (strain DS-1 / DSM 13023 / NCIMB 13966).